The following is a 183-amino-acid chain: Endoribonuclease YbeY (183 aa).

Residues histidine 143, histidine 147, and histidine 153 each coordinate Zn(2+).

Belongs to the endoribonuclease YbeY family. The cofactor is Zn(2+).

Its subcellular location is the cytoplasm. Single strand-specific metallo-endoribonuclease involved in late-stage 70S ribosome quality control and in maturation of the 3' terminus of the 16S rRNA. This is Endoribonuclease YbeY from Rickettsia bellii (strain OSU 85-389).